The sequence spans 371 residues: F-box protein At2g26850 (371 aa).

In terms of domain architecture, F-box spans Lys59–His105.

The protein is F-box protein At2g26850 of Arabidopsis thaliana (Mouse-ear cress).